A 504-amino-acid chain; its full sequence is Protein anon-37Cs (504 aa).

In terms of tissue distribution, low levels seen in adult heads, thorax, abdomen and ovaries, high levels in testes.

It localises to the cytoplasm. In terms of biological role, has a non-vital function. The polypeptide is Protein anon-37Cs (anon-37Cs) (Drosophila melanogaster (Fruit fly)).